Here is a 404-residue protein sequence, read N- to C-terminus: Glutamyl-tRNA reductase (404 aa).

Residues 47 to 50 (TCNR), Ser-94, 99 to 101 (EQE), and Gln-105 each bind substrate. Cys-48 functions as the Nucleophile in the catalytic mechanism. Residue 174 to 179 (GAGEMG) coordinates NADP(+).

As to quaternary structure, homotetramer.

It catalyses the reaction (S)-4-amino-5-oxopentanoate + tRNA(Glu) + NADP(+) = L-glutamyl-tRNA(Glu) + NADPH + H(+). It functions in the pathway porphyrin-containing compound metabolism; protoporphyrin-IX biosynthesis; 5-aminolevulinate from L-glutamyl-tRNA(Glu): step 1/2. Inhibited by heavy metal compounds, Zn(2+), and heme. Also competitively inhibited by glutamycin. Catalyzes the NADPH-dependent reduction of glutamyl-tRNA(Glu) to glutamate 1-semialdehyde (GSA). In the absence of NADPH, exhibits substrate esterase activity, leading to the release of glutamate from tRNA. This chain is Glutamyl-tRNA reductase (hemA), found in Methanopyrus kandleri (strain AV19 / DSM 6324 / JCM 9639 / NBRC 100938).